The primary structure comprises 214 residues: Uridine kinase (214 aa).

Position 11–18 (11–18 (GGSGSGKT)) interacts with ATP.

It belongs to the uridine kinase family.

The protein localises to the cytoplasm. The catalysed reaction is uridine + ATP = UMP + ADP + H(+). The enzyme catalyses cytidine + ATP = CMP + ADP + H(+). The protein operates within pyrimidine metabolism; CTP biosynthesis via salvage pathway; CTP from cytidine: step 1/3. It functions in the pathway pyrimidine metabolism; UMP biosynthesis via salvage pathway; UMP from uridine: step 1/1. This chain is Uridine kinase, found in Brevibacillus brevis (strain 47 / JCM 6285 / NBRC 100599).